Here is a 209-residue protein sequence, read N- to C-terminus: Imidazole glycerol phosphate synthase subunit HisH (209 aa).

One can recognise a Glutamine amidotransferase type-1 domain in the interval 1-205 (MIAIIDYGMG…QGVVEAWKSS (205 aa)). The active-site Nucleophile is the C79. Active-site residues include H180 and E182.

In terms of assembly, heterodimer of HisH and HisF.

It is found in the cytoplasm. It carries out the reaction 5-[(5-phospho-1-deoxy-D-ribulos-1-ylimino)methylamino]-1-(5-phospho-beta-D-ribosyl)imidazole-4-carboxamide + L-glutamine = D-erythro-1-(imidazol-4-yl)glycerol 3-phosphate + 5-amino-1-(5-phospho-beta-D-ribosyl)imidazole-4-carboxamide + L-glutamate + H(+). The enzyme catalyses L-glutamine + H2O = L-glutamate + NH4(+). Its pathway is amino-acid biosynthesis; L-histidine biosynthesis; L-histidine from 5-phospho-alpha-D-ribose 1-diphosphate: step 5/9. IGPS catalyzes the conversion of PRFAR and glutamine to IGP, AICAR and glutamate. The HisH subunit catalyzes the hydrolysis of glutamine to glutamate and ammonia as part of the synthesis of IGP and AICAR. The resulting ammonia molecule is channeled to the active site of HisF. This Bacillus cereus (strain G9842) protein is Imidazole glycerol phosphate synthase subunit HisH.